A 196-amino-acid chain; its full sequence is Peptidyl-tRNA hydrolase (196 aa).

His15 contributes to the tRNA binding site. His20 functions as the Proton acceptor in the catalytic mechanism. TRNA is bound by residues Tyr66, Asn68, and Asn114.

Belongs to the PTH family. As to quaternary structure, monomer.

It is found in the cytoplasm. The catalysed reaction is an N-acyl-L-alpha-aminoacyl-tRNA + H2O = an N-acyl-L-amino acid + a tRNA + H(+). In terms of biological role, hydrolyzes ribosome-free peptidyl-tRNAs (with 1 or more amino acids incorporated), which drop off the ribosome during protein synthesis, or as a result of ribosome stalling. Its function is as follows. Catalyzes the release of premature peptidyl moieties from peptidyl-tRNA molecules trapped in stalled 50S ribosomal subunits, and thus maintains levels of free tRNAs and 50S ribosomes. This is Peptidyl-tRNA hydrolase from Polynucleobacter necessarius subsp. necessarius (strain STIR1).